The chain runs to 75 residues: Acyl carrier protein (75 aa).

Residues 1–74 enclose the Carrier domain; that stretch reads MLDKVKEIIV…DVINYIEANK (74 aa). Ser-34 carries the O-(pantetheine 4'-phosphoryl)serine modification.

The protein belongs to the acyl carrier protein (ACP) family. 4'-phosphopantetheine is transferred from CoA to a specific serine of apo-ACP by AcpS. This modification is essential for activity because fatty acids are bound in thioester linkage to the sulfhydryl of the prosthetic group.

It is found in the cytoplasm. It functions in the pathway lipid metabolism; fatty acid biosynthesis. Its function is as follows. Carrier of the growing fatty acid chain in fatty acid biosynthesis. This is Acyl carrier protein from Fusobacterium nucleatum subsp. nucleatum (strain ATCC 25586 / DSM 15643 / BCRC 10681 / CIP 101130 / JCM 8532 / KCTC 2640 / LMG 13131 / VPI 4355).